The following is a 727-amino-acid chain: Cyclin-T1 (727 aa).

Ser117 carries the phosphoserine modification. A Nuclear localization signal motif is present at residues 253 to 270; it reads KRIWNWRAWQADRKTKAD. A Glycyl lysine isopeptide (Lys-Gly) (interchain with G-Cter in SUMO2) cross-link involves residue Lys343. A Phosphoserine modification is found at Ser389. Positions 389-420 form a coiled coil; sequence SLKEYRAKHAEELAAQKRQLENMEANVKSQYA. Lys391 is subject to N6-acetyllysine. Residue Lys416 forms a Glycyl lysine isopeptide (Lys-Gly) (interchain with G-Cter in SUMO2) linkage. 2 positions are modified to ADP-ribosylserine: Ser417 and Ser475. Residues 481-551 are histidine-rich domain (HRD); the sequence is IKMRIKVHTA…RLGDPKHSSQ (71 aa). A Glycyl lysine isopeptide (Lys-Gly) (interchain with G-Cter in SUMO2) cross-link involves residue Lys482. At Lys486 the chain carries N6-(ADP-ribosyl)lysine. Residues 487 to 507 show a composition bias toward basic and acidic residues; sequence VHTAADKHNSVDDSVTKNREH. Disordered regions lie at residues 487 to 631 and 691 to 727; these read VHTA…QPSC and YMNPRAGGMSSRSGNTDKPRPPPLPSEPPPPLPPLPK. His488 carries the post-translational modification ADP-ribosylhistidine. A phosphoserine mark is found at Ser496 and Ser500. Over residues 508–531 the composition is skewed to basic residues; that stretch reads KEKHKTHPSNHHHHHNHHSHKHSH. Position 531 is an ADP-ribosylhistidine (His531). 3 positions are modified to ADP-ribosylserine: Ser532, Ser550, and Ser553. His557 bears the ADP-ribosylhistidine mark. A compositionally biased stretch (low complexity) spans 561–571; it reads SLSSSFSSSSS. At Ser564 the chain carries ADP-ribosylserine. Phosphoserine is present on Ser565. The segment covering 616 to 631 has biased composition (polar residues); that stretch reads GHSSDTSGLHFSQPSC. Positions 711-727 are enriched in pro residues; that stretch reads PPPLPSEPPPPLPPLPK.

The protein belongs to the cyclin family. Cyclin C subfamily. Cyclin-T1 is the predominant cyclin that associates with CDK9 to form a heterodimer called P-TEFb. P-TEFb forms a complex with AFF4/AF5Q31. Component of a complex which is at least composed of HTATSF1/Tat-SF1, P-TEFb complex, RNA pol II, SUPT5H, and NCL/nucleolin. Component of the 7SK snRNP complex at least composed of P-TEFb (composed of CDK9 and CCNT1/cyclin-T1), HEXIM1, HEXIM2, BCDIN3, SART3 proteins and 7SK and U6 snRNAs. Interacts (via central region) with ZMYND8 (via N-terminus); the interaction is direct and the association appears to occur between homodimeric ZMYND8 and the activated form of the P-TEFb complex. Interacts with BRD4, targets chromatin binding. Interacts with JMJD6. Interacts with MDFIC. Interacts with HSF1. Interacts with HTATSF1. Interacts with TBX21. In terms of assembly, (Microbial infection) Binds to BIV Tat, however Tat binds TAR RNA in a Cyc-T1-independent mode. Post-translationally, ADP-ribosylation on serine residues by PARP1 in response to DNA damage disrupts the phase separation activity of CCNT1, thereby preventing activation of CDK9.

Its subcellular location is the nucleus. Regulatory subunit of the cyclin-dependent kinase pair (CDK9/cyclin-T1) complex, also called positive transcription elongation factor B (P-TEFb), which facilitates the transition from abortive to productive elongation by phosphorylating the CTD (C-terminal domain) of the large subunit of RNA polymerase II (RNA Pol II). Required to activate the protein kinase activity of CDK9: acts by mediating formation of liquid-liquid phase separation (LLPS) that enhances binding of P-TEFb to the CTD of RNA Pol II. This is Cyclin-T1 (CCNT1) from Bos taurus (Bovine).